Reading from the N-terminus, the 526-residue chain is UDP-N-acetylmuramoyl-L-alanyl-D-glutamate--2,6-diaminopimelate ligase (526 aa).

UDP-N-acetyl-alpha-D-muramoyl-L-alanyl-D-glutamate contacts are provided by leucine 48 and serine 50. An ATP-binding site is contributed by 136-142 (GTSGKTT). UDP-N-acetyl-alpha-D-muramoyl-L-alanyl-D-glutamate is bound by residues 178 to 179 (TT), serine 205, and arginine 213. Lysine 245 is subject to N6-carboxylysine. Meso-2,6-diaminopimelate contacts are provided by residues arginine 408, 432-435 (DNPR), glycine 490, and glutamate 494. Residues 432–435 (DNPR) carry the Meso-diaminopimelate recognition motif motif.

The protein belongs to the MurCDEF family. MurE subfamily. Requires Mg(2+) as cofactor. Carboxylation is probably crucial for Mg(2+) binding and, consequently, for the gamma-phosphate positioning of ATP.

It localises to the cytoplasm. It catalyses the reaction UDP-N-acetyl-alpha-D-muramoyl-L-alanyl-D-glutamate + meso-2,6-diaminopimelate + ATP = UDP-N-acetyl-alpha-D-muramoyl-L-alanyl-gamma-D-glutamyl-meso-2,6-diaminopimelate + ADP + phosphate + H(+). The protein operates within cell wall biogenesis; peptidoglycan biosynthesis. Catalyzes the addition of meso-diaminopimelic acid to the nucleotide precursor UDP-N-acetylmuramoyl-L-alanyl-D-glutamate (UMAG) in the biosynthesis of bacterial cell-wall peptidoglycan. This is UDP-N-acetylmuramoyl-L-alanyl-D-glutamate--2,6-diaminopimelate ligase from Corynebacterium efficiens (strain DSM 44549 / YS-314 / AJ 12310 / JCM 11189 / NBRC 100395).